We begin with the raw amino-acid sequence, 126 residues long: MIRTMLQGKLHRVKVTQADLHYEGSCAIDQDFLEAAGILEYEAIDIYNVDNGQRFSTYAIAAERGSRIISVNGAAARCACVGDKLIICSYVQMSDAAARLHHPKVAYFEGENQLQRKAKAVPVQVA.

S25 (schiff-base intermediate with substrate; via pyruvic acid) is an active-site residue. S25 carries the post-translational modification Pyruvic acid (Ser). T57 contributes to the substrate binding site. Y58 (proton donor) is an active-site residue. Substrate is bound at residue G73 to A75.

The protein belongs to the PanD family. In terms of assembly, heterooctamer of four alpha and four beta subunits. Pyruvate is required as a cofactor. Is synthesized initially as an inactive proenzyme, which is activated by self-cleavage at a specific serine bond to produce a beta-subunit with a hydroxyl group at its C-terminus and an alpha-subunit with a pyruvoyl group at its N-terminus.

It localises to the cytoplasm. The enzyme catalyses L-aspartate + H(+) = beta-alanine + CO2. The protein operates within cofactor biosynthesis; (R)-pantothenate biosynthesis; beta-alanine from L-aspartate: step 1/1. Catalyzes the pyruvoyl-dependent decarboxylation of aspartate to produce beta-alanine. In Yersinia pseudotuberculosis serotype IB (strain PB1/+), this protein is Aspartate 1-decarboxylase.